Here is a 339-residue protein sequence, read N- to C-terminus: Lipoate-protein ligase A (339 aa).

In terms of domain architecture, BPL/LPL catalytic spans 29-216; the sequence is DPSQQVLFLW…SFENFYAGKA (188 aa). ATP-binding positions include arginine 71, 76–79, and lysine 134; that span reads GAVF. Lysine 134 provides a ligand contact to (R)-lipoate.

The protein belongs to the LplA family. In terms of assembly, monomer.

Its subcellular location is the cytoplasm. It catalyses the reaction L-lysyl-[lipoyl-carrier protein] + (R)-lipoate + ATP = N(6)-[(R)-lipoyl]-L-lysyl-[lipoyl-carrier protein] + AMP + diphosphate + H(+). The protein operates within protein modification; protein lipoylation via exogenous pathway; protein N(6)-(lipoyl)lysine from lipoate: step 1/2. It participates in protein modification; protein lipoylation via exogenous pathway; protein N(6)-(lipoyl)lysine from lipoate: step 2/2. Functionally, catalyzes both the ATP-dependent activation of exogenously supplied lipoate to lipoyl-AMP and the transfer of the activated lipoyl onto the lipoyl domains of lipoate-dependent enzymes. The sequence is that of Lipoate-protein ligase A from Bdellovibrio bacteriovorus (strain ATCC 15356 / DSM 50701 / NCIMB 9529 / HD100).